A 1722-amino-acid polypeptide reads, in one-letter code: Signal-induced proliferation-associated 1-like protein 2 (1722 aa).

Disordered stretches follow at residues 1-29 (MSDP…RTMQ) and 44-72 (SMGP…TPAV). Residues 57-66 (EGGGGGGGPA) are compositionally biased toward gly residues. Ser149, Ser380, and Ser384 each carry phosphoserine. A disordered region spans residues 362–405 (ASAASQTPVPVGPAGGCESPLGSKEDLNSKENPDADEGDGKSND). A compositionally biased stretch (basic and acidic residues) spans 384 to 403 (SKEDLNSKENPDADEGDGKS). A Rap-GAP domain is found at 596–813 (LLKLDEQGLS…RTRQEYLKDL (218 aa)). The region spanning 951–1027 (EMTLRRNGLG…VKVVIIQPHE (77 aa)) is the PDZ domain. At Ser1030 the chain carries Phosphoserine. Disordered stretches follow at residues 1068 to 1246 (HRVP…FGSG) and 1331 to 1360 (GSMG…SKST). Composition is skewed to low complexity over residues 1091–1103 (LQCQ…AQAA) and 1120–1131 (SSPSNQSSSSDP). Residues 1195–1218 (YKERVLQKDGSCKESPNKLSHIGD) show a composition bias toward basic and acidic residues. Low complexity predominate over residues 1220 to 1237 (SCSSHSSSNTLSSNTSSN). Residue Ser1245 is modified to Phosphoserine. The segment covering 1331–1355 (GSMGDLSEVSSHSSGSQHSGSPSAH) has biased composition (low complexity). Residues Ser1461, Ser1472, Ser1478, Ser1488, Ser1549, Ser1552, and Ser1591 each carry the phosphoserine modification. A coiled-coil region spans residues 1652 to 1712 (STLTGKVNQL…ATAQLRKFTE (61 aa)).

This is Signal-induced proliferation-associated 1-like protein 2 (Sipa1l2) from Mus musculus (Mouse).